Consider the following 439-residue polypeptide: Homogentisate 1,2-dioxygenase (439 aa).

H293 acts as the Proton acceptor in catalysis. Positions 336 and 342 each coordinate Fe cation. Positions 351 and 372 each coordinate homogentisate. H372 provides a ligand contact to Fe cation.

This sequence belongs to the homogentisate dioxygenase family. As to quaternary structure, hexamer; dimer of trimers. It depends on Fe cation as a cofactor.

The enzyme catalyses homogentisate + O2 = 4-maleylacetoacetate + H(+). It participates in amino-acid degradation; L-phenylalanine degradation; acetoacetate and fumarate from L-phenylalanine: step 4/6. In terms of biological role, involved in the catabolism of homogentisate (2,5-dihydroxyphenylacetate or 2,5-OH-PhAc), a central intermediate in the degradation of phenylalanine and tyrosine. Catalyzes the oxidative ring cleavage of the aromatic ring of homogentisate to yield maleylacetoacetate. The polypeptide is Homogentisate 1,2-dioxygenase (Cupriavidus pinatubonensis (strain JMP 134 / LMG 1197) (Cupriavidus necator (strain JMP 134))).